Reading from the N-terminus, the 900-residue chain is Alanine--tRNA ligase (900 aa).

Residues His604, His608, Cys708, and His712 each coordinate Zn(2+).

Belongs to the class-II aminoacyl-tRNA synthetase family. Requires Zn(2+) as cofactor.

The protein localises to the cytoplasm. It catalyses the reaction tRNA(Ala) + L-alanine + ATP = L-alanyl-tRNA(Ala) + AMP + diphosphate. Catalyzes the attachment of alanine to tRNA(Ala) in a two-step reaction: alanine is first activated by ATP to form Ala-AMP and then transferred to the acceptor end of tRNA(Ala). Also edits incorrectly charged Ser-tRNA(Ala) and Gly-tRNA(Ala) via its editing domain. This is Alanine--tRNA ligase from Saccharolobus islandicus (strain Y.G.57.14 / Yellowstone #1) (Sulfolobus islandicus).